A 370-amino-acid chain; its full sequence is Peptide chain release factor 1 (370 aa).

N5-methylglutamine is present on Gln-237. A compositionally biased stretch (basic and acidic residues) spans 286–296 (ERQRSARDATR). The disordered stretch occupies residues 286–310 (ERQRSARDATRKSQVGTGDRSEKIR).

It belongs to the prokaryotic/mitochondrial release factor family. Methylated by PrmC. Methylation increases the termination efficiency of RF1.

Its subcellular location is the cytoplasm. In terms of biological role, peptide chain release factor 1 directs the termination of translation in response to the peptide chain termination codons UAG and UAA. The sequence is that of Peptide chain release factor 1 from Anaeromyxobacter dehalogenans (strain 2CP-C).